Here is a 246-residue protein sequence, read N- to C-terminus: Small ribosomal subunit protein uS2 (246 aa).

Belongs to the universal ribosomal protein uS2 family.

This Helicobacter acinonychis (strain Sheeba) protein is Small ribosomal subunit protein uS2.